The following is a 333-amino-acid chain: Cytosolic sulfotransferase 10 (333 aa).

76-81 (KSGTTW) contributes to the 3'-phosphoadenylyl sulfate binding site. His-146 serves as the catalytic Proton acceptor. 3'-phosphoadenylyl sulfate is bound by residues Arg-168, Ser-176, Tyr-234, and 299–301 (RKG).

The protein belongs to the sulfotransferase 1 family. Expressed in roots.

The protein resides in the cytoplasm. Its function is as follows. Sulfotransferase that utilizes 3'-phospho-5'-adenylyl sulfate (PAPS) as sulfonate donor to specifically catalyze the sulfate conjugation of brassinosteroids, including castasterone (CS), brassinolide (BL), related 24-epimers, and the naturally occurring (22R, 23R)-28-homobrassinosteroids. No activity on phenolic acids, desulfo-glucosinolates, flavonoids, steroids, gibberellic acids, cytokinins, phenylpropanoids, hydroxyjasmonates and coumarins. The polypeptide is Cytosolic sulfotransferase 10 (SOT10) (Arabidopsis thaliana (Mouse-ear cress)).